A 266-amino-acid chain; its full sequence is Orotidine 5'-phosphate decarboxylase (266 aa).

Substrate contacts are provided by residues Asp-37, 59 to 61 (KTH), 91 to 100 (DRKFADIGNT), Tyr-217, and Arg-235. Lys-93 functions as the Proton donor in the catalytic mechanism.

It belongs to the OMP decarboxylase family.

The catalysed reaction is orotidine 5'-phosphate + H(+) = UMP + CO2. It functions in the pathway pyrimidine metabolism; UMP biosynthesis via de novo pathway; UMP from orotate: step 2/2. The protein is Orotidine 5'-phosphate decarboxylase (URA3) of Cyberlindnera jadinii (Torula yeast).